The sequence spans 306 residues: Acetyl-coenzyme A carboxylase carboxyl transferase subunit beta (306 aa).

Residues 28–297 (LWIKCPDTGQ…TPAGKPSTPV (270 aa)) form the CoA carboxyltransferase N-terminal domain. The interval 287–306 (QTPAGKPSTPVAPEPVPDAA) is disordered. Positions 296–306 (PVAPEPVPDAA) are enriched in pro residues.

This sequence belongs to the AccD/PCCB family. As to quaternary structure, acetyl-CoA carboxylase is a heterohexamer composed of biotin carboxyl carrier protein (AccB), biotin carboxylase (AccC) and two subunits each of ACCase subunit alpha (AccA) and ACCase subunit beta (AccD).

It is found in the cytoplasm. The enzyme catalyses N(6)-carboxybiotinyl-L-lysyl-[protein] + acetyl-CoA = N(6)-biotinyl-L-lysyl-[protein] + malonyl-CoA. Its pathway is lipid metabolism; malonyl-CoA biosynthesis; malonyl-CoA from acetyl-CoA: step 1/1. Functionally, component of the acetyl coenzyme A carboxylase (ACC) complex. Biotin carboxylase (BC) catalyzes the carboxylation of biotin on its carrier protein (BCCP) and then the CO(2) group is transferred by the transcarboxylase to acetyl-CoA to form malonyl-CoA. The sequence is that of Acetyl-coenzyme A carboxylase carboxyl transferase subunit beta from Methylorubrum populi (strain ATCC BAA-705 / NCIMB 13946 / BJ001) (Methylobacterium populi).